The chain runs to 694 residues: Elongation factor G (694 aa).

Residues Asp-8–Leu-282 enclose the tr-type G domain. GTP-binding positions include Ala-17 to Thr-24, Asp-81 to His-85, and Asn-135 to Asp-138. The interval Ile-284–Asp-303 is disordered.

The protein belongs to the TRAFAC class translation factor GTPase superfamily. Classic translation factor GTPase family. EF-G/EF-2 subfamily.

The protein resides in the cytoplasm. Its function is as follows. Catalyzes the GTP-dependent ribosomal translocation step during translation elongation. During this step, the ribosome changes from the pre-translocational (PRE) to the post-translocational (POST) state as the newly formed A-site-bound peptidyl-tRNA and P-site-bound deacylated tRNA move to the P and E sites, respectively. Catalyzes the coordinated movement of the two tRNA molecules, the mRNA and conformational changes in the ribosome. This is Elongation factor G from Symbiobacterium thermophilum (strain DSM 24528 / JCM 14929 / IAM 14863 / T).